We begin with the raw amino-acid sequence, 430 residues long: Serine--tRNA ligase (430 aa).

T235–E237 lines the L-serine pocket. ATP is bound by residues R266–E268 and V282. E289 provides a ligand contact to L-serine. E353 to S356 provides a ligand contact to ATP. L-serine is bound at residue S389.

The protein belongs to the class-II aminoacyl-tRNA synthetase family. Type-1 seryl-tRNA synthetase subfamily. As to quaternary structure, homodimer. The tRNA molecule binds across the dimer.

Its subcellular location is the cytoplasm. It carries out the reaction tRNA(Ser) + L-serine + ATP = L-seryl-tRNA(Ser) + AMP + diphosphate + H(+). The enzyme catalyses tRNA(Sec) + L-serine + ATP = L-seryl-tRNA(Sec) + AMP + diphosphate + H(+). It functions in the pathway aminoacyl-tRNA biosynthesis; selenocysteinyl-tRNA(Sec) biosynthesis; L-seryl-tRNA(Sec) from L-serine and tRNA(Sec): step 1/1. Its function is as follows. Catalyzes the attachment of serine to tRNA(Ser). Is also able to aminoacylate tRNA(Sec) with serine, to form the misacylated tRNA L-seryl-tRNA(Sec), which will be further converted into selenocysteinyl-tRNA(Sec). The protein is Serine--tRNA ligase of Chlorobium phaeovibrioides (strain DSM 265 / 1930) (Prosthecochloris vibrioformis (strain DSM 265)).